We begin with the raw amino-acid sequence, 361 residues long: Phosphoserine aminotransferase (361 aa).

Arg-43 provides a ligand contact to L-glutamate. Pyridoxal 5'-phosphate-binding positions include 77 to 78 (AS), Trp-103, Thr-153, Asp-173, and Gln-196. Lys-197 bears the N6-(pyridoxal phosphate)lysine mark. 238-239 (NT) contributes to the pyridoxal 5'-phosphate binding site.

The protein belongs to the class-V pyridoxal-phosphate-dependent aminotransferase family. SerC subfamily. In terms of assembly, homodimer. Requires pyridoxal 5'-phosphate as cofactor.

Its subcellular location is the cytoplasm. The catalysed reaction is O-phospho-L-serine + 2-oxoglutarate = 3-phosphooxypyruvate + L-glutamate. The enzyme catalyses 4-(phosphooxy)-L-threonine + 2-oxoglutarate = (R)-3-hydroxy-2-oxo-4-phosphooxybutanoate + L-glutamate. The protein operates within amino-acid biosynthesis; L-serine biosynthesis; L-serine from 3-phospho-D-glycerate: step 2/3. It functions in the pathway cofactor biosynthesis; pyridoxine 5'-phosphate biosynthesis; pyridoxine 5'-phosphate from D-erythrose 4-phosphate: step 3/5. Catalyzes the reversible conversion of 3-phosphohydroxypyruvate to phosphoserine and of 3-hydroxy-2-oxo-4-phosphonooxybutanoate to phosphohydroxythreonine. This Pseudomonas aeruginosa (strain LESB58) protein is Phosphoserine aminotransferase.